A 370-amino-acid polypeptide reads, in one-letter code: Chloromuconate cycloisomerase (370 aa).

The active-site Proton acceptor is K165. Mn(2+) is bound by residues D194, E220, and D245. The active-site Proton donor is E323.

Belongs to the mandelate racemase/muconate lactonizing enzyme family. It depends on Mn(2+) as a cofactor.

It carries out the reaction 2-[(2R)-2-chloro-2,5-dihydro-5-oxofuryl]acetate = 3-chloro-cis,cis-muconate + H(+). It participates in aromatic compound metabolism; 3-chlorocatechol degradation. The polypeptide is Chloromuconate cycloisomerase (tcbD) (Pseudomonas sp. (strain P51)).